Here is a 235-residue protein sequence, read N- to C-terminus: 7-cyano-7-deazaguanine synthase (235 aa).

10 to 20 (FSGGQDSTTCL) contacts ATP. 4 residues coordinate Zn(2+): C198, C213, C216, and C219.

The protein belongs to the QueC family. Zn(2+) serves as cofactor.

It carries out the reaction 7-carboxy-7-deazaguanine + NH4(+) + ATP = 7-cyano-7-deazaguanine + ADP + phosphate + H2O + H(+). The protein operates within purine metabolism; 7-cyano-7-deazaguanine biosynthesis. Catalyzes the ATP-dependent conversion of 7-carboxy-7-deazaguanine (CDG) to 7-cyano-7-deazaguanine (preQ(0)). The polypeptide is 7-cyano-7-deazaguanine synthase (Paracidovorax citrulli (strain AAC00-1) (Acidovorax citrulli)).